Here is a 250-residue protein sequence, read N- to C-terminus: L-ascorbate peroxidase, cytosolic (250 aa).

The Proton acceptor role is filled by His42. The tract at residues Val113–Gly137 is disordered. Basic and acidic residues predominate over residues Pro117–Gly137. Residue His163 coordinates heme b. K(+) is bound by residues Thr164, Thr180, Asn182, Ile185, and Asp187.

This sequence belongs to the peroxidase family. Ascorbate peroxidase subfamily. It depends on heme b as a cofactor.

It is found in the cytoplasm. It catalyses the reaction L-ascorbate + H2O2 = L-dehydroascorbate + 2 H2O. Functionally, plays a key role in hydrogen peroxide removal. The protein is L-ascorbate peroxidase, cytosolic (APX1) of Pisum sativum (Garden pea).